Here is a 609-residue protein sequence, read N- to C-terminus: Putative transcriptional regulatory protein y4pA (609 aa).

The Sigma-54 factor interaction domain maps to 313–533; that stretch reads IVGRSPSIQQ…LRSVLETAAI (221 aa). 395–404 serves as a coordination point for ATP; sequence HPKATLLIES. The segment at residues 578-597 is a DNA-binding region (H-T-H motif); that stretch reads RGEAARYLGISRKTLYNKMR.

Probable transcriptional regulator that acts in conjunction with sigma-54. This is Putative transcriptional regulatory protein y4pA from Sinorhizobium fredii (strain NBRC 101917 / NGR234).